A 309-amino-acid polypeptide reads, in one-letter code: Thermolabile glutaminase (309 aa).

Substrate-binding residues include Ser64, Asn114, Glu160, Asn167, Tyr191, Tyr243, and Val261.

This sequence belongs to the glutaminase family. As to quaternary structure, homotetramer.

It catalyses the reaction L-glutamine + H2O = L-glutamate + NH4(+). This Rhizobium etli (strain ATCC 51251 / DSM 11541 / JCM 21823 / NBRC 15573 / CFN 42) protein is Thermolabile glutaminase (glsA).